A 1509-amino-acid chain; its full sequence is DNA-directed RNA polymerase subunit beta' (1509 aa).

Zn(2+)-binding residues include cysteine 75, cysteine 77, cysteine 90, and cysteine 93. Aspartate 474, aspartate 476, and aspartate 478 together coordinate Mg(2+). Positions 804, 878, 885, and 888 each coordinate Zn(2+).

The protein belongs to the RNA polymerase beta' chain family. In terms of assembly, the RNAP catalytic core consists of 2 alpha, 1 beta, 1 beta' and 1 omega subunit. When a sigma factor is associated with the core the holoenzyme is formed, which can initiate transcription. Mg(2+) is required as a cofactor. Zn(2+) serves as cofactor.

It catalyses the reaction RNA(n) + a ribonucleoside 5'-triphosphate = RNA(n+1) + diphosphate. Its function is as follows. DNA-dependent RNA polymerase catalyzes the transcription of DNA into RNA using the four ribonucleoside triphosphates as substrates. This is DNA-directed RNA polymerase subunit beta' from Sulfurovum sp. (strain NBC37-1).